Consider the following 141-residue polypeptide: MEIRIFQQDDFEEVILLWEHCDLLRPWNDPEMDIERKLNHDPELFLVAEVNGTIVGSVMGGYDGHRGSAYYLGVHPDYRGRGFANALISRLEKKLIARGCPKLNIMVREDNDAVIGMYEKLDYETQDTIMLGKRLIVDQEY.

Positions 1 to 141 (MEIRIFQQDD…GKRLIVDQEY (141 aa)) constitute an N-acetyltransferase domain.

The protein belongs to the acetyltransferase family. YpeA subfamily.

This is Acetyltransferase YPN_1354 from Yersinia pestis bv. Antiqua (strain Nepal516).